A 382-amino-acid chain; its full sequence is D-galactonate dehydratase (382 aa).

Residue Asp-183 coordinates Mg(2+). The active-site Proton donor is His-185. Mg(2+) contacts are provided by Glu-209 and Glu-235. His-285 functions as the Proton acceptor in the catalytic mechanism. Positions 361–382 (NENPPDWRNPVWRHSDGSIAEW) are disordered.

It belongs to the mandelate racemase/muconate lactonizing enzyme family. GalD subfamily. Mg(2+) is required as a cofactor.

It catalyses the reaction D-galactonate = 2-dehydro-3-deoxy-D-galactonate + H2O. Its pathway is carbohydrate acid metabolism; D-galactonate degradation; D-glyceraldehyde 3-phosphate and pyruvate from D-galactonate: step 1/3. Its function is as follows. Catalyzes the dehydration of D-galactonate to 2-keto-3-deoxy-D-galactonate. The chain is D-galactonate dehydratase from Xanthomonas oryzae pv. oryzae (strain MAFF 311018).